The sequence spans 480 residues: tRNA-2-methylthio-N(6)-dimethylallyladenosine synthase (480 aa).

In terms of domain architecture, MTTase N-terminal spans 3–120; the sequence is KKLYIKTWGC…LPEMLNQLQH (118 aa). [4Fe-4S] cluster-binding residues include Cys12, Cys49, Cys83, Cys157, Cys161, and Cys164. The Radical SAM core domain occupies 143–375; sequence KADGASAFVS…QEQITHQALR (233 aa). Positions 378–441 constitute a TRAM domain; sequence RQMLNTEQRV…ANSLRGELVR (64 aa).

It belongs to the methylthiotransferase family. MiaB subfamily. Monomer. It depends on [4Fe-4S] cluster as a cofactor.

The protein localises to the cytoplasm. It catalyses the reaction N(6)-dimethylallyladenosine(37) in tRNA + (sulfur carrier)-SH + AH2 + 2 S-adenosyl-L-methionine = 2-methylsulfanyl-N(6)-dimethylallyladenosine(37) in tRNA + (sulfur carrier)-H + 5'-deoxyadenosine + L-methionine + A + S-adenosyl-L-homocysteine + 2 H(+). Its function is as follows. Catalyzes the methylthiolation of N6-(dimethylallyl)adenosine (i(6)A), leading to the formation of 2-methylthio-N6-(dimethylallyl)adenosine (ms(2)i(6)A) at position 37 in tRNAs that read codons beginning with uridine. The chain is tRNA-2-methylthio-N(6)-dimethylallyladenosine synthase from Colwellia psychrerythraea (strain 34H / ATCC BAA-681) (Vibrio psychroerythus).